The primary structure comprises 393 residues: Acetate kinase (393 aa).

Position 7 (asparagine 7) interacts with Mg(2+). ATP is bound at residue lysine 14. Arginine 89 is a substrate binding site. Residue aspartate 146 is the Proton donor/acceptor of the active site. Residues 204–208 (HIGNG), 279–281 (DSR), and 327–331 (GIGEN) contribute to the ATP site. Glutamate 379 contributes to the Mg(2+) binding site.

The protein belongs to the acetokinase family. As to quaternary structure, homodimer. It depends on Mg(2+) as a cofactor. Requires Mn(2+) as cofactor.

The protein resides in the cytoplasm. The enzyme catalyses acetate + ATP = acetyl phosphate + ADP. It participates in metabolic intermediate biosynthesis; acetyl-CoA biosynthesis; acetyl-CoA from acetate: step 1/2. Catalyzes the formation of acetyl phosphate from acetate and ATP. Can also catalyze the reverse reaction. The sequence is that of Acetate kinase from Acholeplasma laidlawii (strain PG-8A).